The sequence spans 155 residues: SsrA-binding protein (155 aa).

This sequence belongs to the SmpB family.

Its subcellular location is the cytoplasm. In terms of biological role, required for rescue of stalled ribosomes mediated by trans-translation. Binds to transfer-messenger RNA (tmRNA), required for stable association of tmRNA with ribosomes. tmRNA and SmpB together mimic tRNA shape, replacing the anticodon stem-loop with SmpB. tmRNA is encoded by the ssrA gene; the 2 termini fold to resemble tRNA(Ala) and it encodes a 'tag peptide', a short internal open reading frame. During trans-translation Ala-aminoacylated tmRNA acts like a tRNA, entering the A-site of stalled ribosomes, displacing the stalled mRNA. The ribosome then switches to translate the ORF on the tmRNA; the nascent peptide is terminated with the 'tag peptide' encoded by the tmRNA and targeted for degradation. The ribosome is freed to recommence translation, which seems to be the essential function of trans-translation. In Lactococcus lactis subsp. lactis (strain IL1403) (Streptococcus lactis), this protein is SsrA-binding protein.